A 386-amino-acid polypeptide reads, in one-letter code: Succinyl-diaminopimelate desuccinylase (386 aa).

Residue His76 participates in Zn(2+) binding. Asp78 is a catalytic residue. Residue Asp110 participates in Zn(2+) binding. Glu144 serves as the catalytic Proton acceptor. The Zn(2+) site is built by Glu145, Glu173, and His359.

This sequence belongs to the peptidase M20A family. DapE subfamily. In terms of assembly, homodimer. Requires Zn(2+) as cofactor. It depends on Co(2+) as a cofactor.

It carries out the reaction N-succinyl-(2S,6S)-2,6-diaminopimelate + H2O = (2S,6S)-2,6-diaminopimelate + succinate. The protein operates within amino-acid biosynthesis; L-lysine biosynthesis via DAP pathway; LL-2,6-diaminopimelate from (S)-tetrahydrodipicolinate (succinylase route): step 3/3. In terms of biological role, catalyzes the hydrolysis of N-succinyl-L,L-diaminopimelic acid (SDAP), forming succinate and LL-2,6-diaminopimelate (DAP), an intermediate involved in the bacterial biosynthesis of lysine and meso-diaminopimelic acid, an essential component of bacterial cell walls. The protein is Succinyl-diaminopimelate desuccinylase of Chromohalobacter salexigens (strain ATCC BAA-138 / DSM 3043 / CIP 106854 / NCIMB 13768 / 1H11).